The chain runs to 245 residues: tRNA pseudouridine synthase A (245 aa).

Aspartate 52 serves as the catalytic Nucleophile. Residue tyrosine 111 coordinates substrate.

It belongs to the tRNA pseudouridine synthase TruA family. Homodimer.

It catalyses the reaction uridine(38/39/40) in tRNA = pseudouridine(38/39/40) in tRNA. Formation of pseudouridine at positions 38, 39 and 40 in the anticodon stem and loop of transfer RNAs. In Rhodopseudomonas palustris (strain HaA2), this protein is tRNA pseudouridine synthase A.